A 1000-amino-acid chain; its full sequence is Putative methyl-accepting chemotaxis protein sll0041 (1000 aa).

The segment at 1-59 is disordered; the sequence is MTQNPSSDRRPDTAQSVANGETLDGALFTGLTDTAAAQDESSETSASFATIDGEDKSEV. GAF domains are found at residues 342 to 478 and 509 to 650; these read EIQG…QTTL and NSEQ…GLAL. In terms of domain architecture, HAMP spans 671–722; sequence EKMQKRALELLMEVDPVSRGDLTIRAHVTEDEIGTIADSYNATIESLRRIVT. Residues 727–963 enclose the Methyl-accepting transducer domain; the sequence is AASQFTETTD…SVTQTMALVA (237 aa).

Belongs to the methyl-accepting chemotaxis (MCP) protein family.

The chain is Putative methyl-accepting chemotaxis protein sll0041 from Synechocystis sp. (strain ATCC 27184 / PCC 6803 / Kazusa).